We begin with the raw amino-acid sequence, 347 residues long: Heme A synthase (347 aa).

A run of 8 helical transmembrane segments spans residues 14–34 (VKIWLCICCIGILIMVFIGGI), 96–116 (FHRLLGRIVGLVFLIPFLYFM), 129–149 (FILIAFLILVQGVMGWYMVKS), 162–182 (LAMHLLLALAIFYLLWKHFLL), 199–219 (VFYIIISLITIQITCGALVAG), 260–280 (FIHEVIALLILIIAVITLLVL), 287–307 (MYLLLALLLIQLTLGILTFIY), and 311–331 (IILASLHQVTAFILFASSIYL). Residue His262 coordinates heme. His317 is a binding site for heme.

Belongs to the COX15/CtaA family. Type 2 subfamily. As to quaternary structure, interacts with CtaB. The cofactor is heme b.

It is found in the cell membrane. The catalysed reaction is Fe(II)-heme o + 2 A + H2O = Fe(II)-heme a + 2 AH2. The protein operates within porphyrin-containing compound metabolism; heme A biosynthesis; heme A from heme O: step 1/1. Functionally, catalyzes the conversion of heme O to heme A by two successive hydroxylations of the methyl group at C8. The first hydroxylation forms heme I, the second hydroxylation results in an unstable dihydroxymethyl group, which spontaneously dehydrates, resulting in the formyl group of heme A. This chain is Heme A synthase, found in Ehrlichia ruminantium (strain Gardel).